The primary structure comprises 196 residues: MRSQVRWRLCWENELQLSDHIELAEFFRRTYGPTGAFNAKPFEGSRSWAGARPEFRAIAYDSSGIAAHMGLLRRFIKIDGADLLVAELGLYGIRRDLEGLGISSSLRVVRPVLQELGVPFGFGTVRPALHKHVARLGRGGLLVVKSGIRVRSTLRDALLDKPPTRIDDALVVVLPVGRPISDWPAGEMIDRNGAEL.

This sequence belongs to the NodA family.

Its subcellular location is the cytoplasm. Its function is as follows. N-acyltransferase required for nodulation. Acts in the production of a small, heat-stable compound (Nod) that stimulates mitosis in various plant protoplasts. The protein is Nodulation protein A of Mesorhizobium plurifarium.